A 358-amino-acid polypeptide reads, in one-letter code: Protein-glutamate methylesterase/protein-glutamine glutaminase 2 (358 aa).

In terms of domain architecture, Response regulatory spans 7–124 (SVLLVDDSAV…KNFLIESAAE (118 aa)). Residue D58 is modified to 4-aspartylphosphate. The region spanning 170-358 (AQTTERIVAI…QEIHQAILHR (189 aa)) is the CheB-type methylesterase domain. Residues S182, H208, and D304 contribute to the active site.

The protein belongs to the CheB family. In terms of processing, phosphorylated by CheA. Phosphorylation of the N-terminal regulatory domain activates the methylesterase activity.

The protein resides in the cytoplasm. The catalysed reaction is [protein]-L-glutamate 5-O-methyl ester + H2O = L-glutamyl-[protein] + methanol + H(+). It catalyses the reaction L-glutaminyl-[protein] + H2O = L-glutamyl-[protein] + NH4(+). Functionally, involved in chemotaxis. Part of a chemotaxis signal transduction system that modulates chemotaxis in response to various stimuli. Catalyzes the demethylation of specific methylglutamate residues introduced into the chemoreceptors (methyl-accepting chemotaxis proteins or MCP) by CheR. Also mediates the irreversible deamidation of specific glutamine residues to glutamic acid. The chain is Protein-glutamate methylesterase/protein-glutamine glutaminase 2 from Pseudomonas syringae pv. tomato (strain ATCC BAA-871 / DC3000).